The primary structure comprises 405 residues: Imidazolonepropionase (405 aa).

Fe(3+)-binding residues include H72 and H74. Positions 72 and 74 each coordinate Zn(2+). Positions 81, 144, and 177 each coordinate 4-imidazolone-5-propanoate. Residue Y144 participates in N-formimidoyl-L-glutamate binding. H242 provides a ligand contact to Fe(3+). H242 contributes to the Zn(2+) binding site. Q245 contributes to the 4-imidazolone-5-propanoate binding site. D317 contributes to the Fe(3+) binding site. D317 provides a ligand contact to Zn(2+). N319 and G321 together coordinate N-formimidoyl-L-glutamate. T322 provides a ligand contact to 4-imidazolone-5-propanoate.

It belongs to the metallo-dependent hydrolases superfamily. HutI family. Zn(2+) is required as a cofactor. Fe(3+) serves as cofactor.

The protein localises to the cytoplasm. It catalyses the reaction 4-imidazolone-5-propanoate + H2O = N-formimidoyl-L-glutamate. It functions in the pathway amino-acid degradation; L-histidine degradation into L-glutamate; N-formimidoyl-L-glutamate from L-histidine: step 3/3. In terms of biological role, catalyzes the hydrolytic cleavage of the carbon-nitrogen bond in imidazolone-5-propanoate to yield N-formimidoyl-L-glutamate. It is the third step in the universal histidine degradation pathway. This is Imidazolonepropionase from Klebsiella pneumoniae (strain 342).